The following is a 460-amino-acid chain: Signal recognition particle 54 kDa protein (460 aa).

GTP is bound by residues 104–111, 184–188, and 242–245; these read GLQGSGKT, DTAGR, and TKLD.

This sequence belongs to the GTP-binding SRP family. SRP54 subfamily. As to quaternary structure, part of the signal recognition particle protein translocation system, which is composed of SRP and FtsY. Archaeal SRP consists of a 7S RNA molecule of 300 nucleotides and two protein subunits: SRP54 and SRP19.

The protein resides in the cytoplasm. It catalyses the reaction GTP + H2O = GDP + phosphate + H(+). Functionally, involved in targeting and insertion of nascent membrane proteins into the cytoplasmic membrane. Binds to the hydrophobic signal sequence of the ribosome-nascent chain (RNC) as it emerges from the ribosomes. The SRP-RNC complex is then targeted to the cytoplasmic membrane where it interacts with the SRP receptor FtsY. The polypeptide is Signal recognition particle 54 kDa protein (Halobacterium salinarum (strain ATCC 29341 / DSM 671 / R1)).